The primary structure comprises 164 residues: NADH-quinone oxidoreductase subunit B (164 aa).

The [4Fe-4S] cluster site is built by Cys38, Cys39, Cys104, and Cys133.

The protein belongs to the complex I 20 kDa subunit family. In terms of assembly, NDH-1 is composed of 14 different subunits. Subunits NuoB, C, D, E, F, and G constitute the peripheral sector of the complex. [4Fe-4S] cluster serves as cofactor.

It localises to the cell inner membrane. It catalyses the reaction a quinone + NADH + 5 H(+)(in) = a quinol + NAD(+) + 4 H(+)(out). NDH-1 shuttles electrons from NADH, via FMN and iron-sulfur (Fe-S) centers, to quinones in the respiratory chain. The immediate electron acceptor for the enzyme in this species is believed to be ubiquinone. Couples the redox reaction to proton translocation (for every two electrons transferred, four hydrogen ions are translocated across the cytoplasmic membrane), and thus conserves the redox energy in a proton gradient. This chain is NADH-quinone oxidoreductase subunit B, found in Protochlamydia amoebophila (strain UWE25).